Here is an 845-residue protein sequence, read N- to C-terminus: Protein translocase subunit SecA 1 (845 aa).

Residues Gln-85, 103 to 107 (GEGKT), and Asp-492 contribute to the ATP site.

This sequence belongs to the SecA family. In terms of assembly, monomer and homodimer. Part of the essential Sec protein translocation apparatus which comprises SecA, SecYEG and auxiliary proteins SecDF. Other proteins may also be involved.

Its subcellular location is the cell membrane. It is found in the cytoplasm. It catalyses the reaction ATP + H2O + cellular proteinSide 1 = ADP + phosphate + cellular proteinSide 2.. Functionally, part of the Sec protein translocase complex. Interacts with the SecYEG preprotein conducting channel. Has a central role in coupling the hydrolysis of ATP to the transfer of proteins into and across the cell membrane, serving as an ATP-driven molecular motor driving the stepwise translocation of polypeptide chains across the membrane. The sequence is that of Protein translocase subunit SecA 1 from Corynebacterium glutamicum (strain ATCC 13032 / DSM 20300 / JCM 1318 / BCRC 11384 / CCUG 27702 / LMG 3730 / NBRC 12168 / NCIMB 10025 / NRRL B-2784 / 534).